Reading from the N-terminus, the 370-residue chain is Ni-sirohydrochlorin a,c-diamide reductive cyclase complex, component CfbD (370 aa).

This sequence belongs to the NifD/NifK/NifE/NifN family. In terms of assembly, homodimer or monomer. The Ni-sirohydrochlorin a,c-diamide reductive cyclase complex is composed of a NifH homolog component CfbC and a NifD homolog component CfbD. [4Fe-4S] cluster is required as a cofactor.

It carries out the reaction Ni-sirohydrochlorin a,c-diamide + 3 AH2 + ATP + H2O = 15,17(3)-seco-F430-17(3)-acid + 3 A + ADP + phosphate. Involved in the biosynthesis of the unique nickel-containing tetrapyrrole coenzyme F430, the prosthetic group of methyl-coenzyme M reductase (MCR), which plays a key role in methanogenesis and anaerobic methane oxidation. Catalyzes both the six-electron reduction of the tetrahydroporphyrin ring system and the gamma-lactamization of the c-acetamide side chain of Ni-sirohydrochlorin a,c-diamide to yield 15,17(3)-seco-F430-17(3)-acid (seco-F430), the last intermediate in the biosynthesis of the coenzyme F430. The sequence is that of Ni-sirohydrochlorin a,c-diamide reductive cyclase complex, component CfbD from Methanosarcina acetivorans (strain ATCC 35395 / DSM 2834 / JCM 12185 / C2A).